A 205-amino-acid polypeptide reads, in one-letter code: Ribosomal RNA small subunit methyltransferase G (205 aa).

S-adenosyl-L-methionine-binding positions include glycine 73, leucine 78, 124-125 (VE), and arginine 139.

Belongs to the methyltransferase superfamily. RNA methyltransferase RsmG family.

Its subcellular location is the cytoplasm. The catalysed reaction is guanosine(527) in 16S rRNA + S-adenosyl-L-methionine = N(7)-methylguanosine(527) in 16S rRNA + S-adenosyl-L-homocysteine. Specifically methylates the N7 position of guanine in position 527 of 16S rRNA. This chain is Ribosomal RNA small subunit methyltransferase G, found in Erwinia tasmaniensis (strain DSM 17950 / CFBP 7177 / CIP 109463 / NCPPB 4357 / Et1/99).